Here is a 495-residue protein sequence, read N- to C-terminus: WD repeat-containing protein 37 (495 aa).

The segment at 1–34 is disordered; sequence MPTESGSWAAARQTKQKRKSHSLSIKRTNSSEQD. Polar residues predominate over residues 22 to 31; the sequence is SLSIKRTNSS. WD repeat units lie at residues 154 to 194 and 197 to 236; these read GHRD…CLIK and GHAG…PTPQ. The tract at residues 237–268 is disordered; that stretch reads PMADTSQISGEEEVDFSDKDENDGDGDASSDC. The span at 246-264 shows a compositional bias: acidic residues; that stretch reads GEEEVDFSDKDENDGDGDA. 5 WD repeats span residues 280-319, 322-361, 366-404, 407-446, and 453-494; these read SHQG…LVHS, GHDQ…IHSV, GHTD…SPIA, RTDS…LARL, and GHRR…LLQE.

It is found in the cytoplasm. The protein localises to the nucleus. The sequence is that of WD repeat-containing protein 37 (wdr37) from Xenopus laevis (African clawed frog).